Consider the following 241-residue polypeptide: LexA repressor (241 aa).

Positions 26–46 form a DNA-binding region, H-T-H motif; it reads FDEMKTALDLRSKSGIHRLIT. Active-site for autocatalytic cleavage activity residues include serine 162 and lysine 200.

Belongs to the peptidase S24 family. Homodimer.

The enzyme catalyses Hydrolysis of Ala-|-Gly bond in repressor LexA.. Represses a number of genes involved in the response to DNA damage (SOS response), including recA and lexA. In the presence of single-stranded DNA, RecA interacts with LexA causing an autocatalytic cleavage which disrupts the DNA-binding part of LexA, leading to derepression of the SOS regulon and eventually DNA repair. The protein is LexA repressor of Ruegeria sp. (strain TM1040) (Silicibacter sp.).